Reading from the N-terminus, the 208-residue chain is FMN-dependent NADH:quinone oxidoreductase 3 (208 aa).

Belongs to the azoreductase type 1 family. As to quaternary structure, homodimer. It depends on FMN as a cofactor.

It carries out the reaction 2 a quinone + NADH + H(+) = 2 a 1,4-benzosemiquinone + NAD(+). It catalyses the reaction N,N-dimethyl-1,4-phenylenediamine + anthranilate + 2 NAD(+) = 2-(4-dimethylaminophenyl)diazenylbenzoate + 2 NADH + 2 H(+). Quinone reductase that provides resistance to thiol-specific stress caused by electrophilic quinones. Functionally, also exhibits azoreductase activity. Catalyzes the reductive cleavage of the azo bond in aromatic azo compounds to the corresponding amines. This Bacillus cereus (strain ATCC 14579 / DSM 31 / CCUG 7414 / JCM 2152 / NBRC 15305 / NCIMB 9373 / NCTC 2599 / NRRL B-3711) protein is FMN-dependent NADH:quinone oxidoreductase 3.